Consider the following 207-residue polypeptide: ATP synthase subunit b 2 (207 aa).

A helical membrane pass occupies residues 53-72 (TYASQLLWLVITFSVFYLLM).

The protein belongs to the ATPase B chain family. As to quaternary structure, F-type ATPases have 2 components, F(1) - the catalytic core - and F(0) - the membrane proton channel. F(1) has five subunits: alpha(3), beta(3), gamma(1), delta(1), epsilon(1). F(0) has three main subunits: a(1), b(2) and c(10-14). The alpha and beta chains form an alternating ring which encloses part of the gamma chain. F(1) is attached to F(0) by a central stalk formed by the gamma and epsilon chains, while a peripheral stalk is formed by the delta and b chains.

The protein resides in the cell inner membrane. Functionally, f(1)F(0) ATP synthase produces ATP from ADP in the presence of a proton or sodium gradient. F-type ATPases consist of two structural domains, F(1) containing the extramembraneous catalytic core and F(0) containing the membrane proton channel, linked together by a central stalk and a peripheral stalk. During catalysis, ATP synthesis in the catalytic domain of F(1) is coupled via a rotary mechanism of the central stalk subunits to proton translocation. In terms of biological role, component of the F(0) channel, it forms part of the peripheral stalk, linking F(1) to F(0). The b'-subunit is a diverged and duplicated form of b found in plants and photosynthetic bacteria. In Rhizobium leguminosarum bv. trifolii (strain WSM2304), this protein is ATP synthase subunit b 2 (atpF2).